The chain runs to 318 residues: Ribose-phosphate pyrophosphokinase 2 (318 aa).

Position 96–101 (96–101) interacts with ATP; the sequence is RQDKKD. Mg(2+)-binding residues include D128, H130, D139, and D143. H130 provides a ligand contact to ATP. The binding of phosphoribosylpyrophosphate stretch occupies residues 212–227; sequence KDRVAILVDDMADTCG.

It belongs to the ribose-phosphate pyrophosphokinase family. Homodimer. The active form is probably a hexamer composed of 3 homodimers. It depends on Mg(2+) as a cofactor.

It catalyses the reaction D-ribose 5-phosphate + ATP = 5-phospho-alpha-D-ribose 1-diphosphate + AMP + H(+). It functions in the pathway metabolic intermediate biosynthesis; 5-phospho-alpha-D-ribose 1-diphosphate biosynthesis; 5-phospho-alpha-D-ribose 1-diphosphate from D-ribose 5-phosphate (route I): step 1/1. Activated by magnesium and inorganic phosphate. Competitively or non-competitively inhibited by ADP, 2,3-bisphosphoglyceride or GDP. Its function is as follows. Catalyzes the synthesis of phosphoribosylpyrophosphate (PRPP) that is essential for nucleotide synthesis. The sequence is that of Ribose-phosphate pyrophosphokinase 2 (Prps2) from Mus musculus (Mouse).